The chain runs to 878 residues: Valine--tRNA ligase (878 aa).

A 'HIGH' region motif is present at residues 45-55; it reads PNVTGQLHMGH. The 'KMSKS' region motif lies at 524–528; the sequence is KMSKS. Residue Lys527 coordinates ATP. A coiled-coil region spans residues 804–871; sequence PLKDLIDLEK…REKEVLEQRI (68 aa).

The protein belongs to the class-I aminoacyl-tRNA synthetase family. ValS type 1 subfamily. Monomer.

It is found in the cytoplasm. The catalysed reaction is tRNA(Val) + L-valine + ATP = L-valyl-tRNA(Val) + AMP + diphosphate. In terms of biological role, catalyzes the attachment of valine to tRNA(Val). As ValRS can inadvertently accommodate and process structurally similar amino acids such as threonine, to avoid such errors, it has a 'posttransfer' editing activity that hydrolyzes mischarged Thr-tRNA(Val) in a tRNA-dependent manner. This is Valine--tRNA ligase from Carboxydothermus hydrogenoformans (strain ATCC BAA-161 / DSM 6008 / Z-2901).